A 250-amino-acid polypeptide reads, in one-letter code: ATP synthase subunit a (250 aa).

The next 6 helical transmembrane spans lie at F27–F47, F85–I105, L115–V135, F141–I161, M181–A201, and E223–N243.

The protein belongs to the ATPase A chain family. F-type ATPases have 2 components, CF(1) - the catalytic core - and CF(0) - the membrane proton channel. CF(1) has five subunits: alpha(3), beta(3), gamma(1), delta(1), epsilon(1). CF(0) has three main subunits: a(1), b(2) and c(9-12). The alpha and beta chains form an alternating ring which encloses part of the gamma chain. CF(1) is attached to CF(0) by a central stalk formed by the gamma and epsilon chains, while a peripheral stalk is formed by the delta and b chains.

The protein localises to the cell inner membrane. Its function is as follows. Key component of the proton channel; it plays a direct role in the translocation of protons across the membrane. The chain is ATP synthase subunit a from Xanthobacter autotrophicus (strain ATCC BAA-1158 / Py2).